The following is a 421-amino-acid chain: Histidine--tRNA ligase (421 aa).

It belongs to the class-II aminoacyl-tRNA synthetase family.

Its subcellular location is the cytoplasm. It catalyses the reaction tRNA(His) + L-histidine + ATP = L-histidyl-tRNA(His) + AMP + diphosphate + H(+). In Pyrobaculum calidifontis (strain DSM 21063 / JCM 11548 / VA1), this protein is Histidine--tRNA ligase.